We begin with the raw amino-acid sequence, 117 residues long: MNPIRRRKIEAEAVRTVAMMILSGKVKDPRVHMVSVHRAEISEDGKNMKVFVTAICTDKKKIKVLSGLNSASGLFQATLSGKLGLRITPRMHFLWDEEYIQSLDESLRLTRKPTNTD.

It belongs to the RbfA family. In terms of assembly, monomer. Binds 30S ribosomal subunits, but not 50S ribosomal subunits or 70S ribosomes.

It is found in the cytoplasm. Its function is as follows. One of several proteins that assist in the late maturation steps of the functional core of the 30S ribosomal subunit. Associates with free 30S ribosomal subunits (but not with 30S subunits that are part of 70S ribosomes or polysomes). Required for efficient processing of 16S rRNA. May interact with the 5'-terminal helix region of 16S rRNA. The chain is Ribosome-binding factor A from Leptospira interrogans serogroup Icterohaemorrhagiae serovar Lai (strain 56601).